The primary structure comprises 258 residues: Phosphatidylglycerol--prolipoprotein diacylglyceryl transferase (258 aa).

The next 7 helical transmembrane spans lie at 9 to 29 (ILIQ…ATGF), 53 to 73 (LLTY…TLIY), 90 to 110 (EGGL…WLFV), 117 to 139 (KFLW…IRLG), 169 to 189 (PVQL…LMLF), 198 to 218 (GFLF…IEYF), and 230 to 250 (LISV…VLML). Arginine 137 lines the a 1,2-diacyl-sn-glycero-3-phospho-(1'-sn-glycerol) pocket.

This sequence belongs to the Lgt family.

Its subcellular location is the cell inner membrane. The catalysed reaction is L-cysteinyl-[prolipoprotein] + a 1,2-diacyl-sn-glycero-3-phospho-(1'-sn-glycerol) = an S-1,2-diacyl-sn-glyceryl-L-cysteinyl-[prolipoprotein] + sn-glycerol 1-phosphate + H(+). It functions in the pathway protein modification; lipoprotein biosynthesis (diacylglyceryl transfer). Functionally, catalyzes the transfer of the diacylglyceryl group from phosphatidylglycerol to the sulfhydryl group of the N-terminal cysteine of a prolipoprotein, the first step in the formation of mature lipoproteins. The protein is Phosphatidylglycerol--prolipoprotein diacylglyceryl transferase of Tolumonas auensis (strain DSM 9187 / NBRC 110442 / TA 4).